The chain runs to 173 residues: Microfibrillar-associated protein 5 (173 aa).

An N-terminal signal peptide occupies residues 1–21; the sequence is MSLLGPKVLLFLAAFIITSDW. The Cell attachment site signature appears at 30–32; sequence RGD. Residue T54 is glycosylated (O-linked (GalNAc...) threonine). An N-linked (GlcNAc...) asparagine glycan is attached at N79.

Belongs to the MFAP family. As to quaternary structure, interacts with TGFB2. Interacts with BMP2. Interacts with FBN1 (via N-terminal domain) and FBN2. Forms intermolecular disulfide bonds either with other MAGP-2 molecules or with other components of the microfibrils. In terms of processing, N- and O-glycosylated. O-glycosylated with core 1 or possibly core 8 glycans. O-glycan heterogeneity at Thr-54: HexHexNAc (major) and HexHexNAc + sulfate (minor).

The protein localises to the secreted. The protein resides in the extracellular space. It localises to the extracellular matrix. In terms of biological role, may play a role in hematopoiesis. In the cardiovascular system, could regulate growth factors or participate in cell signaling in maintaining large vessel integrity. Component of the elastin-associated microfibrils. This Homo sapiens (Human) protein is Microfibrillar-associated protein 5 (MFAP5).